A 742-amino-acid chain; its full sequence is Cullin-2 (742 aa).

The region spanning 672-734 (DRRYAIDAAL…RDYLERDTDN (63 aa)) is the Cullin neddylation domain. Lys686 is covalently cross-linked (Glycyl lysine isopeptide (Lys-Gly) (interchain with G-Cter in NEDD8)).

The protein belongs to the cullin family. Interacts with SKIP17 and FBW2/SKIP18. Neddylated; which enhances the ubiquitination activity of E3 ubiquitin-protein ligase complexes.

Functionally, core component of multiple SCF (SKP1-CUL1-F-box protein) E3 ubiquitin-protein ligase complexes. Involved in ubiquitination and subsequent proteasomal degradation of target proteins. The sequence is that of Cullin-2 (CUL2) from Arabidopsis thaliana (Mouse-ear cress).